We begin with the raw amino-acid sequence, 138 residues long: Acidic phospholipase A2 Cvv-E6h (138 aa).

Residues 1-16 form the signal peptide; that stretch reads MRTLWIVAVLLLGVEG. 7 disulfides stabilise this stretch: Cys-42–Cys-131, Cys-44–Cys-60, Cys-59–Cys-111, Cys-65–Cys-138, Cys-66–Cys-104, Cys-73–Cys-97, and Cys-91–Cys-102. Residues Tyr-43, Gly-45, and Gly-47 each contribute to the Ca(2+) site. His-63 is a catalytic residue. Asp-64 is a Ca(2+) binding site. Residue Asp-105 is part of the active site.

The protein belongs to the phospholipase A2 family. Group II subfamily. D49 sub-subfamily. The cofactor is Ca(2+). In terms of tissue distribution, expressed by the venom gland.

It is found in the secreted. It carries out the reaction a 1,2-diacyl-sn-glycero-3-phosphocholine + H2O = a 1-acyl-sn-glycero-3-phosphocholine + a fatty acid + H(+). Snake venom phospholipase A2 (PLA2) that shows very low inhibition of ADP-induced platelet aggregation in platelet-rich plasma of human, rabbit and guinea pig. In vivo, shows efficient edema-inducing activities in rat paws. PLA2 catalyzes the calcium-dependent hydrolysis of the 2-acyl groups in 3-sn-phosphoglycerides. This chain is Acidic phospholipase A2 Cvv-E6h, found in Crotalus viridis viridis (Prairie rattlesnake).